The chain runs to 688 residues: Translation initiation factor IF-2 (688 aa).

The segment at 53 to 101 (GAEKPSVADEFEVEEKVVRSKKNSNKNKKKGKANEDKRQDNFAGRQQTP) is disordered. Basic residues predominate over residues 71-83 (RSKKNSNKNKKKG). One can recognise a tr-type G domain in the interval 190–359 (ERPAVVTIMG…LLVSEVEEYK (170 aa)). Residues 199–206 (GHVDHGKT) form a G1 region. A GTP-binding site is contributed by 199-206 (GHVDHGKT). Residues 224-228 (GITQH) form a G2 region. The tract at residues 245-248 (DTPG) is G3. GTP is bound by residues 245-249 (DTPGH) and 299-302 (NKMD). Residues 299 to 302 (NKMD) are G4. Positions 335–337 (SAI) are G5.

This sequence belongs to the TRAFAC class translation factor GTPase superfamily. Classic translation factor GTPase family. IF-2 subfamily.

The protein localises to the cytoplasm. Functionally, one of the essential components for the initiation of protein synthesis. Protects formylmethionyl-tRNA from spontaneous hydrolysis and promotes its binding to the 30S ribosomal subunits. Also involved in the hydrolysis of GTP during the formation of the 70S ribosomal complex. This chain is Translation initiation factor IF-2, found in Bacillus mycoides (strain KBAB4) (Bacillus weihenstephanensis).